A 135-amino-acid chain; its full sequence is Mediator of RNA polymerase II transcription subunit 10 (135 aa).

Belongs to the Mediator complex subunit 10 family. As to quaternary structure, component of the Mediator complex.

The protein resides in the nucleus. In terms of biological role, component of the Mediator complex, a coactivator involved in the regulated transcription of nearly all RNA polymerase II-dependent genes. Mediator functions as a bridge to convey information from gene-specific regulatory proteins to the basal RNA polymerase II transcription machinery. Mediator is recruited to promoters by direct interactions with regulatory proteins and serves as a scaffold for the assembly of a functional preinitiation complex with RNA polymerase II and the general transcription factors. This Xenopus laevis (African clawed frog) protein is Mediator of RNA polymerase II transcription subunit 10 (med10).